The chain runs to 140 residues: Chromatin accessibility complex 16kD protein (140 aa).

The tract at residues 111–140 is disordered; it reads LNRSAGSDDDDDDDDDDDEEESESESESDE. The span at 117-140 shows a compositional bias: acidic residues; that stretch reads SDDDDDDDDDDDEEESESESESDE.

Component of the chromatin accessibility complex (CHRAC), composed of Chrac-14, Chrac-16, Acf and Iswi. Forms a heterodimer with Chrac-14. The Chrac-14/Chrac-16 heterodimer interacts with Acf (via N-terminus). Stabilizes the interaction between Chrac-14 and Iswi.

It localises to the nucleus. Histone-like protein which promotes nucleosome sliding of ATP-dependent nucleosome remodeling complexes. Part of the chromatin-accessibility complex (CHRAC) which uses energy/ATP to increase the general accessibility of DNA in chromatin. As a heterodimer with Chrac-14, binds DNA and facilitates nucleosome sliding by Acf. As part of the CHRAC complex, required for oogenesis. The sequence is that of Chromatin accessibility complex 16kD protein from Drosophila melanogaster (Fruit fly).